Consider the following 946-residue polypeptide: MDVNQIRKTFIDFFREKCEHTFVPSSAVIPHDDPTLLFANAGMNQFKPIFLGQVNPKSEQAKLKRAVNSQKCIRAGGKHNDLDDVGKDTYHHTFFEMLGNWSFGNYFKKEAITWAWELLTEVYKLDKERLYVTYFRGDPEKGLEADLEAKNLWLQYLPEERVLPFGMKENFWEMGDQGPCGPCSEIHYDKVEGRDGASFVNADDPTLIEIWNLVFIQYNREADKSLRPLPQKHVDTGMGLERLTSIIQKVPTNYDTDVFMPIFAAIQEVTGYPEPYGGKVGAEDTQQVDMAYRVIADHIRTLTFSIADGAAPSVDGRGQVLRRILRRAVRYGKQKLNAPAGFFSKLVDVVIANFGEFFPELRKKPEHIKMVLTREEDMFNKTLEKGIVEFEKMIKKSVNNTLSAENAYFLSTCYGFPIDLTTIMAEEKNYKVDIKGYEGLCEAQSEIDRKRQKEKKVELTLGAEANAWLKNNDIKPTDDSFKYKQHEIQSVIKAIWNGKEFVDTAPKGTLIGVVLENSNFYAEQGGQIYDIGQLSFIDDQKTAFDVKDCKVFGGYVLHIGYLSYECDSLKVGDRVELTVDYTRRSPIMSNHTSTHMVNYALKNILGDGIDQRGSFVDAQRFRFDFSFGRAITKDELIKIDQIVNDQIFKQLDVHAKEVGLASAKKINGLRAVFGEVYPDPVRVVSVGVPVEQLIENPTNPEWANYSIEFCGGTHLSNTKQAELFTITSEETLGAGVRRIVAVTGSEAASAIELNKELEVRFNNALKLSGSELAKEIVSLLDLLKVVTISASVRMNLVETLKEVQALQRKQVKEQETILAQQAQTYLEKTSEELAKSQPKVFVDLVNFNSNTPLITETIKKIQTKSPMTAIMLISPDEEKGKVTCIGIVPKDSEISKTLTANAWVVKVTEVLGGKGGGKVDVAQGVGSKLDKIDEAILVSREFANAN.

Residues histidine 591, histidine 595, cysteine 710, and histidine 714 each contribute to the Zn(2+) site.

It belongs to the class-II aminoacyl-tRNA synthetase family. In terms of assembly, monomer. Requires Zn(2+) as cofactor.

Its subcellular location is the cytoplasm. It catalyses the reaction tRNA(Ala) + L-alanine + ATP = L-alanyl-tRNA(Ala) + AMP + diphosphate. In terms of biological role, catalyzes the attachment of alanine to tRNA(Ala) in a two-step reaction: alanine is first activated by ATP to form Ala-AMP and then transferred to the acceptor end of tRNA(Ala). Also edits incorrectly charged tRNA(Ala) via its editing domain. The polypeptide is Alanine--tRNA ligase, cytoplasmic (alaS) (Dictyostelium discoideum (Social amoeba)).